The chain runs to 257 residues: Acetylglutamate kinase (257 aa).

Residues 41 to 42 (GG), Arg-63, and Asn-156 contribute to the substrate site.

It belongs to the acetylglutamate kinase family. ArgB subfamily.

Its subcellular location is the cytoplasm. It catalyses the reaction N-acetyl-L-glutamate + ATP = N-acetyl-L-glutamyl 5-phosphate + ADP. Its pathway is amino-acid biosynthesis; L-arginine biosynthesis; N(2)-acetyl-L-ornithine from L-glutamate: step 2/4. In terms of biological role, catalyzes the ATP-dependent phosphorylation of N-acetyl-L-glutamate. This is Acetylglutamate kinase from Geobacillus sp. (strain WCH70).